The following is an 801-amino-acid chain: MARSRKNSLVRDIASHPTIPESQTIVGLLDDSYLFDKLKKLSLAVENSDSLQRTDVSEGCSEVNGSEATTSADVKKTNKYLYYTTYLDQLNIKIDEYKVVLDQTRQVNDQLDSSIKKFRKISQDTGAFIEETKTIYEKQSKLSNLTESIPKALHYFEVLDPIMRRLNHATSPAIVKKSSFTTMLATIDESLRFLDENSDLKDAAAYRIKFKQCLIRACELISHFLTNLLKQTNQEILDKTKNKNSLTGLPSTTRDAFLYSKFYTIADTFKIQVSEIVKRSNEKAYNKYHDELNSILYECFNHYFQTRLRLLTPVIWSHIDEIVVKDKDQGLVKFIQDGKVYFQQLCADEYKLFVEFFPEKECRFKINQWFLQLCEPLYDSIRVRVLKETDICTLCDSVTLFAPYYEFEEGSEEYVKQFTDIQYDKLFEPIVQKVQARLILRVQIYVQQNILSYRPTRDVFMISNRRRKSKTSLQGGNEDATTSDDNPDPLLESYLSSFKNRSILPISPNDADDKSIDSEESTDKISQLQTYYPPLLKTLALLSKIYEMINSVVFDDLAHHVVHDCIVSLRNAYDMVIKSSAGKSDFNNLDISLAYLKNLLMLRDSIQNFNIQYTVNETYLDFSGVEGFFKSLKENGRNVLKKTKSSSILTLARELVPKVVNNMVDARTELISELRNVIKDFTESTSLELIDDTLDINSDEDLLSKNVKLRENIKARLPRIYEQILNYIDDQEIVTNLLDAVQELITQSYSKYYETITELAENGKFAKDQVADVMYLDVFTDFFAKEVADLLRNGDIDTITK.

Positions 470-489 are disordered; sequence KTSLQGGNEDATTSDDNPDP. The span at 471–480 shows a compositional bias: polar residues; the sequence is TSLQGGNEDA. Residues Ser507 and Ser647 each carry the phosphoserine modification.

The protein belongs to the COG3 family. As to quaternary structure, component of the conserved oligomeric Golgi (COG or Sec34/Sec35) complex which consists of eight different proteins COG1-COG8.

It localises to the golgi apparatus membrane. Acts as a component of the peripheral membrane COG complex that is involved in intra-Golgi protein trafficking. COG is located at the cis- Golgi, and regulates tethering of retrograde intra-Golgi vesicles and possibly a number of other membrane trafficking events. COG3 is also involved in actin cytoskeleton organization. In Saccharomyces cerevisiae (strain ATCC 204508 / S288c) (Baker's yeast), this protein is Conserved oligomeric Golgi complex subunit 3 (COG3).